Reading from the N-terminus, the 349-residue chain is Hydroxymethylglutaryl-CoA synthase (349 aa).

The (3S)-3-hydroxy-3-methylglutaryl-CoA site is built by Asp-29 and Ala-30. Glu-81 acts as the Proton donor/acceptor in catalysis. (3S)-3-hydroxy-3-methylglutaryl-CoA is bound by residues Cys-113 and Thr-154. Cys-113 acts as the Acyl-thioester intermediate in catalysis. Arg-202 provides a ligand contact to CoA. Thr-204 and His-237 together coordinate (3S)-3-hydroxy-3-methylglutaryl-CoA. His-237 serves as the catalytic Proton donor/acceptor. Residue Lys-242 participates in CoA binding. Positions 246, 269, and 299 each coordinate (3S)-3-hydroxy-3-methylglutaryl-CoA.

This sequence belongs to the thiolase-like superfamily. Archaeal HMG-CoA synthase family. As to quaternary structure, interacts with acetoacetyl-CoA thiolase that catalyzes the precedent step in the pathway and with a DUF35 protein. The acetoacetyl-CoA thiolase/HMG-CoA synthase complex channels the intermediate via a fused CoA-binding site, which allows for efficient coupling of the endergonic thiolase reaction with the exergonic HMGCS reaction.

It carries out the reaction acetoacetyl-CoA + acetyl-CoA + H2O = (3S)-3-hydroxy-3-methylglutaryl-CoA + CoA + H(+). It functions in the pathway metabolic intermediate biosynthesis; (R)-mevalonate biosynthesis; (R)-mevalonate from acetyl-CoA: step 2/3. Functionally, catalyzes the condensation of acetyl-CoA with acetoacetyl-CoA to form 3-hydroxy-3-methylglutaryl-CoA (HMG-CoA). Functions in the mevalonate (MVA) pathway leading to isopentenyl diphosphate (IPP), a key precursor for the biosynthesis of isoprenoid compounds that are building blocks of archaeal membrane lipids. The protein is Hydroxymethylglutaryl-CoA synthase of Methanococcoides burtonii (strain DSM 6242 / NBRC 107633 / OCM 468 / ACE-M).